Here is a 310-residue protein sequence, read N- to C-terminus: Malate dehydrogenase (310 aa).

Residues 7 to 12 (GAGNVG) and D32 each bind NAD(+). The substrate site is built by R81 and R87. NAD(+) contacts are provided by residues N94 and 117-119 (VSN). Substrate is bound by residues N119 and R150. H174 acts as the Proton acceptor in catalysis.

It belongs to the LDH/MDH superfamily. MDH type 3 family.

It carries out the reaction (S)-malate + NAD(+) = oxaloacetate + NADH + H(+). Catalyzes the reversible oxidation of malate to oxaloacetate. The protein is Malate dehydrogenase of Chlorobium limicola (strain DSM 245 / NBRC 103803 / 6330).